A 542-amino-acid chain; its full sequence is Sensor protein CitS (542 aa).

The Cytoplasmic segment spans residues 1-13 (MVKKRFHFSLQTK). A helical membrane pass occupies residues 14 to 34 (IMGLIAALLVFVIGVLTITLA). At 35-175 (VQHTQGERRQ…TEQSIKKHLR (141 aa)) the chain is on the extracellular side. Residues 176-196 (NLSVIAVLVLLLGFIGAAVLA) traverse the membrane as a helical segment. Topologically, residues 197–542 (KSIRKDTLGL…PFDSHRDCGG (346 aa)) are cytoplasmic. The region spanning 216–279 (RERNAMLFAI…MSVLEKGEML (64 aa)) is the PAS domain. Residues 336-528 (AQTHEFSNKL…VFTVFIPKEK (193 aa)) form the Histidine kinase domain. Histidine 339 bears the Phosphohistidine; by autocatalysis mark.

The protein localises to the cell membrane. It catalyses the reaction ATP + protein L-histidine = ADP + protein N-phospho-L-histidine.. In terms of biological role, member of the two-component regulatory system CitT/CitS. Regulates the expression of the citM-yflN operon. Functions probably as a membrane-associated protein kinase that phosphorylates CitT in response to environmental citrate or Mg(2+)-citrate complex. In Bacillus subtilis (strain 168), this protein is Sensor protein CitS (citS).